The following is an 82-amino-acid chain: MVFLLCFFLVADVSYGINGDCELPKVVGFCRARLPRYYYNSSSRRCEKFNYGGCGGNANNFHTLEECEKVCGVRSRDSPKEN.

The signal sequence occupies residues 1-16 (MVFLLCFFLVADVSYG). Residues 21–71 (CELPKVVGFCRARLPRYYYNSSSRRCEKFNYGGCGGNANNFHTLEECEKVC) enclose the BPTI/Kunitz inhibitor domain. 3 cysteine pairs are disulfide-bonded: Cys21–Cys71, Cys30–Cys54, and Cys46–Cys67. A propeptide spanning residues 76–82 (RDSPKEN) is cleaved from the precursor.

This sequence belongs to the venom Kunitz-type family. Sea anemone type 2 potassium channel toxin subfamily.

It localises to the secreted. The protein localises to the nematocyst. Serine protease inhibitor that inhibits both tissue and plasma kallikreins. Has hemolytic activity. Inhibits voltage-gated potassium channels (Kv). The chain is U-actitoxin-Avd3q from Anemonia viridis (Snakelocks anemone).